The chain runs to 414 residues: Serine/threonine transporter SstT (414 aa).

8 consecutive transmembrane segments (helical) span residues 16–36 (GSLV…AWIS), 46–66 (LGTL…LMLV), 84–104 (ILFL…VFSF), 143–163 (ALLN…GFAL), 180–200 (AVTF…FGLV), 219–239 (LVVL…LLVF), 300–320 (MAGA…TLGV), and 332–352 (VVAS…LLLI).

The protein belongs to the dicarboxylate/amino acid:cation symporter (DAACS) (TC 2.A.23) family.

Its subcellular location is the cell inner membrane. The enzyme catalyses L-serine(in) + Na(+)(in) = L-serine(out) + Na(+)(out). It carries out the reaction L-threonine(in) + Na(+)(in) = L-threonine(out) + Na(+)(out). Its function is as follows. Involved in the import of serine and threonine into the cell, with the concomitant import of sodium (symport system). This is Serine/threonine transporter SstT from Salmonella newport (strain SL254).